Here is a 486-residue protein sequence, read N- to C-terminus: L-carnitine:corrinoid methyltransferase (486 aa).

The protein belongs to the trimethylamine methyltransferase family. The L-carnitine:THF methyl transfer system is composed of two methyltransferases, MtcB and MtqA, and the corrinoid protein MtqC.

The enzyme catalyses Co(I)-[quaternary-amine-specific corrinoid protein] + (R)-carnitine + H(+) = (3R)-4-(dimethylamino)-3-hydroxybutanoate + methyl-Co(III)-[quaternary-amine-specific corrinoid protein]. Its function is as follows. Involved in the degradation of the quaternary amine L-carnitine. Component of a corrinoid-dependent methyltransferase system that transfers a methyl group from L-carnitine to tetrahydrofolate (THF), forming methyl-THF, a key intermediate in the Wood-Ljungdahl acetogenesis pathway. MtcB catalyzes the methylation of the corrinoid protein MtqC, using L-carnitine as the methyl donor. L-carnitine demethylation generates the unusual biological product norcarnitine, which is likely degraded by other members of the gut microbiota. In vitro, can methylate free cob(I)alamin. The chain is L-carnitine:corrinoid methyltransferase from Eubacterium limosum.